Here is an 863-residue protein sequence, read N- to C-terminus: Alanine--tRNA ligase (863 aa).

Residues His552, His556, Cys656, and His660 each coordinate Zn(2+).

It belongs to the class-II aminoacyl-tRNA synthetase family. Requires Zn(2+) as cofactor.

Its subcellular location is the cytoplasm. The catalysed reaction is tRNA(Ala) + L-alanine + ATP = L-alanyl-tRNA(Ala) + AMP + diphosphate. In terms of biological role, catalyzes the attachment of alanine to tRNA(Ala) in a two-step reaction: alanine is first activated by ATP to form Ala-AMP and then transferred to the acceptor end of tRNA(Ala). Also edits incorrectly charged Ser-tRNA(Ala) and Gly-tRNA(Ala) via its editing domain. This chain is Alanine--tRNA ligase, found in Alcanivorax borkumensis (strain ATCC 700651 / DSM 11573 / NCIMB 13689 / SK2).